A 348-amino-acid polypeptide reads, in one-letter code: UDP-3-O-acylglucosamine N-acyltransferase (348 aa).

The active-site Proton acceptor is the His-241.

It belongs to the transferase hexapeptide repeat family. LpxD subfamily. As to quaternary structure, homotrimer.

The enzyme catalyses a UDP-3-O-[(3R)-3-hydroxyacyl]-alpha-D-glucosamine + a (3R)-hydroxyacyl-[ACP] = a UDP-2-N,3-O-bis[(3R)-3-hydroxyacyl]-alpha-D-glucosamine + holo-[ACP] + H(+). The protein operates within bacterial outer membrane biogenesis; LPS lipid A biosynthesis. Catalyzes the N-acylation of UDP-3-O-acylglucosamine using 3-hydroxyacyl-ACP as the acyl donor. Is involved in the biosynthesis of lipid A, a phosphorylated glycolipid that anchors the lipopolysaccharide to the outer membrane of the cell. This is UDP-3-O-acylglucosamine N-acyltransferase from Neisseria meningitidis serogroup C (strain 053442).